Here is a 140-residue protein sequence, read N- to C-terminus: MAKKELAKIKLQIPAGVANPSPPVGPALGQHGLNIMQFCKEFNARTQDQKGMIIPVVITAYADRSFTFITKTPPAAVLIMKAAKIDKGSGEPNRNKVGKISIEQVEEIAKLKLPDLTAKDLDSAKRSIIGTARSMGIEIK.

The protein belongs to the universal ribosomal protein uL11 family. Part of the ribosomal stalk of the 50S ribosomal subunit. Interacts with L10 and the large rRNA to form the base of the stalk. L10 forms an elongated spine to which L12 dimers bind in a sequential fashion forming a multimeric L10(L12)X complex. One or more lysine residues are methylated.

Functionally, forms part of the ribosomal stalk which helps the ribosome interact with GTP-bound translation factors. This is Large ribosomal subunit protein uL11 from Lawsonia intracellularis (strain PHE/MN1-00).